A 196-amino-acid polypeptide reads, in one-letter code: Dehydrogenase RED3 (196 aa).

NADP(+) is bound by residues S47, D74, N101, R134, Y166, and K170. Y166 serves as the catalytic Proton acceptor. The Lowers pKa of active site Tyr role is filled by K170.

The protein belongs to the short-chain dehydrogenases/reductases (SDR) family.

It catalyses the reaction a primary alcohol + NAD(+) = an aldehyde + NADH + H(+). The enzyme catalyses a secondary alcohol + NAD(+) = a ketone + NADH + H(+). It functions in the pathway mycotoxin biosynthesis. In terms of biological role, dehydrogenase; part of the Tox1B locus, one of the 2 loci that mediate the biosynthesis of T-toxin, a family of linear polyketides 37 to 45 carbons in length, of which the major component is 41 carbons, and which leads to high virulence to maize. One of the PKSs (PKS1 or PKS2) could synthesize a precursor, used subsequently by the other PKS as starter unit, to add additional carbons. Variability in the length of the final carbon backbone C35-47 could be achieved by varying the number of condensation cycles, or use of different starter or extender units or might be due to decarboxylation of the penultimate product, catalyzed by DEC1. Additional proteins are required for the biosynthesis of T-toxin, including oxidoreductases RED1, RED2, RED3, LAM1 and OXI1, as well as esterase TOX9. The chain is Dehydrogenase RED3 from Cochliobolus heterostrophus (strain C4 / ATCC 48331 / race T) (Southern corn leaf blight fungus).